We begin with the raw amino-acid sequence, 615 residues long: Zinc finger protein 653 (615 aa).

Disordered regions lie at residues 1–48 (MAER…ARRR), 95–117 (RSGRHGKPWEQVPKKPKRKKRRR), 176–236 (PLSD…SSGL), and 401–432 (EEKEEPVAPELATTVPESAEPEAEADGEELDG). Residues 107–118 (PKKPKRKKRRRR) carry the Nuclear localization signal motif. A compositionally biased stretch (basic residues) spans 108-117 (KKPKRKKRRR). Residues 193–205 (AGSSDSSSSGSAS) are compositionally biased toward low complexity. Polar residues predominate over residues 226–236 (TPTSPVGSSGL). The span at 419–432 (AEPEAEADGEELDG) shows a compositional bias: acidic residues. The Nuclear localization signal motif lies at 445–451 (EPEKRRR). 5 C2H2-type zinc fingers span residues 467-492 (FHCPYEGCSQVYVALSSFQNHVNLVH), 498-522 (KVCPHPGCGKKFYLSNHLRRHMIIH), 528-550 (FTCETCGKSFKRKNHLEVHRRTH), 556-578 (LQCEICGYQCRQRASLNWHMKKH), and 586-609 (FTCDRCGKRFEKLDSVKFHTLKSH).

The protein belongs to the krueppel C2H2-type zinc-finger protein family. As to quaternary structure, interacts with NR5A1. In terms of tissue distribution, highly expressed in testis, cerebellum, temporal lobe, hippocampus and the adrenal gland. Moderately expressed in spleen, uterus, thymus, pancreas, kidney, stomach and rectum.

Its subcellular location is the nucleus. Functionally, transcriptional repressor. May repress NR5A1, PPARG, NR1H3, NR4A2, ESR1 and NR3C1 transcriptional activity. This is Zinc finger protein 653 (ZNF653) from Homo sapiens (Human).